The sequence spans 288 residues: Polyamine aminopropyltransferase (288 aa).

Positions 11 to 245 (IEWYPRGYGV…SPWSFLVGVK (235 aa)) constitute a PABS domain. Gln36 contributes to the S-methyl-5'-thioadenosine binding site. Positions 67 and 91 each coordinate spermidine. Residues Glu111 and 148-149 (DG) each bind S-methyl-5'-thioadenosine. Asp166 functions as the Proton acceptor in the catalytic mechanism. 166 to 169 (DSTD) is a spermidine binding site. Residue Pro173 participates in S-methyl-5'-thioadenosine binding.

The protein belongs to the spermidine/spermine synthase family. In terms of assembly, homodimer or homotetramer.

Its subcellular location is the cytoplasm. The enzyme catalyses S-adenosyl 3-(methylsulfanyl)propylamine + agmatine = N(1)-(3-aminopropyl)agmatine + S-methyl-5'-thioadenosine + H(+). It carries out the reaction S-adenosyl 3-(methylsulfanyl)propylamine + putrescine = S-methyl-5'-thioadenosine + spermidine + H(+). The catalysed reaction is cadaverine + S-adenosyl 3-(methylsulfanyl)propylamine = aminopropylcadaverine + S-methyl-5'-thioadenosine + H(+). The protein operates within amine and polyamine biosynthesis; spermidine biosynthesis; spermidine from putrescine: step 1/1. Involved in the biosynthesis of polyamines which are thought to support the growth of thermophilic microorganisms under high-temperature conditions. It seems that long-chain and branched-chain of polyamines effectively stabilize DNA and RNA, respectively. Catalyzes the irreversible transfer of a propylamine group from the amino donor S-adenosylmethioninamine (decarboxy-AdoMet) to agmatine to yield N1-aminopropylagmatine. It can also use cadaverine (1,5-diaminopentane) and putrescine (1,4-diaminobutane) as substrate with a lower activity than that of agmatine. The reaction involves a nucleophilic attack on the C-3 methylene of the propylamine moiety adjacent to the positively charged sulfur of decarboxy-AdoMet. This Thermococcus kodakarensis (strain ATCC BAA-918 / JCM 12380 / KOD1) (Pyrococcus kodakaraensis (strain KOD1)) protein is Polyamine aminopropyltransferase.